Here is a 465-residue protein sequence, read N- to C-terminus: Uronate isomerase (465 aa).

Belongs to the metallo-dependent hydrolases superfamily. Uronate isomerase family.

It carries out the reaction D-glucuronate = D-fructuronate. It catalyses the reaction aldehydo-D-galacturonate = keto-D-tagaturonate. It participates in carbohydrate metabolism; pentose and glucuronate interconversion. The chain is Uronate isomerase from Streptococcus equi subsp. zooepidemicus (strain MGCS10565).